A 79-amino-acid chain; its full sequence is Cytochrome b (79 aa).

A run of 3 helical transmembrane segments spans residues Thr-1–Met-7, Trp-31–Ile-52, and Trp-67–Ala-79. The heme b site is built by His-37 and His-51.

This sequence belongs to the cytochrome b family. The cytochrome bc1 complex contains 11 subunits: 3 respiratory subunits (MT-CYB, CYC1 and UQCRFS1), 2 core proteins (UQCRC1 and UQCRC2) and 6 low-molecular weight proteins (UQCRH/QCR6, UQCRB/QCR7, UQCRQ/QCR8, UQCR10/QCR9, UQCR11/QCR10 and a cleavage product of UQCRFS1). This cytochrome bc1 complex then forms a dimer. Heme b serves as cofactor.

It is found in the mitochondrion inner membrane. Its function is as follows. Component of the ubiquinol-cytochrome c reductase complex (complex III or cytochrome b-c1 complex) that is part of the mitochondrial respiratory chain. The b-c1 complex mediates electron transfer from ubiquinol to cytochrome c. Contributes to the generation of a proton gradient across the mitochondrial membrane that is then used for ATP synthesis. The protein is Cytochrome b (MT-CYB) of Corcorax melanoramphos (White-winged chough).